The sequence spans 547 residues: Probable pectinesterase/pectinesterase inhibitor 12 (547 aa).

A signal peptide spans 1–23; sequence MALSSFNLSSLLFLLFFTPSVFS. The interval 31-185 is pectinesterase inhibitor 12; sequence NPHETSATSF…YKHISNSLSA (155 aa). N-linked (GlcNAc...) asparagine glycans are attached at residues Asn-131, Asn-247, Asn-260, and Asn-303. The pectinesterase 12 stretch occupies residues 237–533; that stretch reads SLVVAADGTG…FTATEFITGD (297 aa). Substrate contacts are provided by Thr-312 and Gln-342. Asp-365 serves as the catalytic Proton donor; for pectinesterase activity. A disulfide bridge links Cys-379 with Cys-399. Asp-386 acts as the Nucleophile; for pectinesterase activity in catalysis. Residues Asn-432 and Asn-443 are each glycosylated (N-linked (GlcNAc...) asparagine). Residues Arg-454 and Trp-456 each coordinate substrate. N-linked (GlcNAc...) asparagine glycosylation occurs at Asn-523.

It in the N-terminal section; belongs to the PMEI family. The protein in the C-terminal section; belongs to the pectinesterase family. As to expression, expressed in siliques.

It is found in the secreted. The protein localises to the cell wall. The enzyme catalyses [(1-&gt;4)-alpha-D-galacturonosyl methyl ester](n) + n H2O = [(1-&gt;4)-alpha-D-galacturonosyl](n) + n methanol + n H(+). The protein operates within glycan metabolism; pectin degradation; 2-dehydro-3-deoxy-D-gluconate from pectin: step 1/5. Its function is as follows. Acts in the modification of cell walls via demethylesterification of cell wall pectin. The sequence is that of Probable pectinesterase/pectinesterase inhibitor 12 (PME12) from Arabidopsis thaliana (Mouse-ear cress).